We begin with the raw amino-acid sequence, 616 residues long: Dihydroxy-acid dehydratase (616 aa).

Asp-81 serves as a coordination point for Mg(2+). Cys-122 serves as a coordination point for [2Fe-2S] cluster. Positions 123 and 124 each coordinate Mg(2+). At Lys-124 the chain carries N6-carboxylysine. A [2Fe-2S] cluster-binding site is contributed by Cys-195. Glu-491 serves as a coordination point for Mg(2+). Catalysis depends on Ser-517, which acts as the Proton acceptor.

The protein belongs to the IlvD/Edd family. In terms of assembly, homodimer. Requires [2Fe-2S] cluster as cofactor. The cofactor is Mg(2+).

It carries out the reaction (2R)-2,3-dihydroxy-3-methylbutanoate = 3-methyl-2-oxobutanoate + H2O. It catalyses the reaction (2R,3R)-2,3-dihydroxy-3-methylpentanoate = (S)-3-methyl-2-oxopentanoate + H2O. It functions in the pathway amino-acid biosynthesis; L-isoleucine biosynthesis; L-isoleucine from 2-oxobutanoate: step 3/4. Its pathway is amino-acid biosynthesis; L-valine biosynthesis; L-valine from pyruvate: step 3/4. Functionally, functions in the biosynthesis of branched-chain amino acids. Catalyzes the dehydration of (2R,3R)-2,3-dihydroxy-3-methylpentanoate (2,3-dihydroxy-3-methylvalerate) into 2-oxo-3-methylpentanoate (2-oxo-3-methylvalerate) and of (2R)-2,3-dihydroxy-3-methylbutanoate (2,3-dihydroxyisovalerate) into 2-oxo-3-methylbutanoate (2-oxoisovalerate), the penultimate precursor to L-isoleucine and L-valine, respectively. This is Dihydroxy-acid dehydratase from Escherichia coli O127:H6 (strain E2348/69 / EPEC).